The following is a 196-amino-acid chain: Ribosome maturation factor RimP (196 aa).

The segment at 163 to 196 (GLAPSKPTGPAPKRPKPNTNSSSNEPAAKKPRAE) is disordered.

This sequence belongs to the RimP family.

Its subcellular location is the cytoplasm. Its function is as follows. Required for maturation of 30S ribosomal subunits. This chain is Ribosome maturation factor RimP, found in Stenotrophomonas maltophilia (strain K279a).